A 131-amino-acid polypeptide reads, in one-letter code: Con-Ins Q1b (131 aa).

The signal sequence occupies residues 1 to 24 (MTTSSYFLLVALGLLLYLCQSSFG). 4 disulfide bridges follow: C29/C107, C41/C110, C53/C123, and C109/C114. Positions 59–92 (LQGGTDDARKKRGRASLLRKRRGFLSMLKARAKR) are cleaved as a propeptide — c peptide. At E118 the chain carries 4-carboxyglutamate; partial. S130 carries the post-translational modification Serine amide.

It belongs to the insulin family. Heterodimer of A and B chains; disulfide-linked. As to expression, expressed by the venom gland.

It is found in the secreted. This venom insulin facilitates prey capture by rapidly inducing hypoglycemic shock. Intraperitoneal injection of this peptide into zebrafish lowers blood glucose with the same potency than human insulin. In vivo, when applied to water, this peptide reduces overall locomotor activity of zebrafish larvae, observed as a significant decrease in the percentage of time spent swimming and movement frequency. This Conus quercinus (Oak cone) protein is Con-Ins Q1b.